Consider the following 262-residue polypeptide: Hemin import ATP-binding protein HmuV (262 aa).

The ABC transporter domain maps to 1 to 247; it reads MRNLTLQRGR…ERIKQIFAFD (247 aa). 31–38 serves as a coordination point for ATP; sequence GPNGTGKS.

The protein belongs to the ABC transporter superfamily. Heme (hemin) importer (TC 3.A.1.14.5) family. The complex is composed of two ATP-binding proteins (HmuV), two transmembrane proteins (HmuU) and a solute-binding protein (HmuT).

The protein resides in the cell inner membrane. Its function is as follows. Part of the ABC transporter complex HmuTUV involved in hemin import. Responsible for energy coupling to the transport system. The polypeptide is Hemin import ATP-binding protein HmuV (Plesiomonas shigelloides (Aeromonas shigelloides)).